A 440-amino-acid chain; its full sequence is Trigger factor (440 aa).

One can recognise a PPIase FKBP-type domain in the interval 163–248; it reads GMVLTVDFSF…LKEIKKKELP (86 aa).

Belongs to the FKBP-type PPIase family. Tig subfamily.

The protein resides in the cytoplasm. It catalyses the reaction [protein]-peptidylproline (omega=180) = [protein]-peptidylproline (omega=0). Functionally, involved in protein export. Acts as a chaperone by maintaining the newly synthesized protein in an open conformation. Functions as a peptidyl-prolyl cis-trans isomerase. The chain is Trigger factor from Trichlorobacter lovleyi (strain ATCC BAA-1151 / DSM 17278 / SZ) (Geobacter lovleyi).